The following is a 1936-amino-acid chain: Potassium channel K1 (1936 aa).

6 helical membrane-spanning segments follow: residues 175 to 195 (IIIL…YILL), 598 to 618 (VWII…LWAA), 643 to 663 (GYIE…GLYF), 670 to 690 (YIFS…SFIM), 701 to 721 (TYWF…AEST), and 734 to 754 (IIII…SGIM). Residues 772-788 (FVYFGVITMSTVGYGDY) constitute an intramembrane region (pore-forming). Residues 791 to 811 (VTPAGKCLTMFIIVTCFTFVG) traverse the membrane as a helical segment. Positions 1141–1185 (DTSSMINYKSKSRVNYKMVKGTKNEFIRNQNYNINSIYYANNDNM) form a coiled coil.

It localises to the membrane. The enzyme catalyses K(+)(in) = K(+)(out). Its activity is regulated as follows. Partially inhibited by Ba(2+) and quinine. Probably insensitive to tetraethylammonium (TEA). Likely a predominant potassium channel in the erythrocytic stages of parasites. Mediates transmembrane potassium transport. Required for the development of oocysts in the mosquito midgut. The sequence is that of Potassium channel K1 from Plasmodium berghei (strain Anka).